A 229-amino-acid chain; its full sequence is Enolase-phosphatase E1 (229 aa).

Belongs to the HAD-like hydrolase superfamily. MasA/MtnC family. Monomer. Requires Mg(2+) as cofactor.

It catalyses the reaction 5-methylsulfanyl-2,3-dioxopentyl phosphate + H2O = 1,2-dihydroxy-5-(methylsulfanyl)pent-1-en-3-one + phosphate. It functions in the pathway amino-acid biosynthesis; L-methionine biosynthesis via salvage pathway; L-methionine from S-methyl-5-thio-alpha-D-ribose 1-phosphate: step 3/6. Its pathway is amino-acid biosynthesis; L-methionine biosynthesis via salvage pathway; L-methionine from S-methyl-5-thio-alpha-D-ribose 1-phosphate: step 4/6. Functionally, bifunctional enzyme that catalyzes the enolization of 2,3-diketo-5-methylthiopentyl-1-phosphate (DK-MTP-1-P) into the intermediate 2-hydroxy-3-keto-5-methylthiopentenyl-1-phosphate (HK-MTPenyl-1-P), which is then dephosphorylated to form the acireductone 1,2-dihydroxy-3-keto-5-methylthiopentene (DHK-MTPene). The sequence is that of Enolase-phosphatase E1 from Yersinia pestis (strain Pestoides F).